Reading from the N-terminus, the 69-residue chain is Large ribosomal subunit protein uL29 (69 aa).

Belongs to the universal ribosomal protein uL29 family.

The sequence is that of Large ribosomal subunit protein uL29 from Carboxydothermus hydrogenoformans (strain ATCC BAA-161 / DSM 6008 / Z-2901).